An 875-amino-acid polypeptide reads, in one-letter code: MSNTYFYSDEEIYNLLRPYVAKWFRQKYTTFTPPQRAAIPLIKQNYNVLVSSPTGSGKTLAAFLGILDSLFELGDNNELEDKVYAIYISPLRALNNDMQRNLLEPLNELRQVNSKLPDVRVGIRTSDTTPYEKQKMLKKPPHILITTPESFGISITSPKFSQKLTDVKWIIVDEIHELANSKRGAYLSAMLELFRNLITKKEFVRIGLSATVSPLEEVAQFLVGKDREYRIVDARFVKPVDIKVISPVKDLVHSSESEVDKGIYKTILNEVKKHRTTLIFTNTRHATERVAYKLRKLAENEKVFDVDAIEAHHSSLSRDVRLDVEEKLKKGILKVVVSSTSLELGIDIGYIDLVILLSSPKSVSRLLQRIGRAGHHIRSISKGRVIVVDRDDLVECSVLAKLARDRKIDSIHIPKNPLDVLSQIIVSASLISPIDRDDLFKILRRSYNFSDLSESDYSLVLRYLSGDFFGVELKNVYAKIRIKEEKIIYPKKGSRLIFYTNSGTIPDEAMISVVTENNRYVGNLEEEFVEILSPGDIFVLSGRTYEFIGSKGSKVIVKEAMGQRPTVPSWFSEMLPLAYESALEIGKFRREIAEMIKKGVTHNEIIESISKEYEIDKHASMSIYTYILEQYLFTNGKVPSDNLILIEIYDDEEGIRNYIFHALYGRRALDALSRAFAYVVSEELDTDVRVSVTDNGFALSVKRDVPFDYNIKSLFEKITPDNVYDIVTRAVMRTEMLKRRFRHCAERSFMILRRYKGRETNLERRELNSEILLKAIREIGNFPVMKETIREILEDHMDILRAKEILKKIASQEIKVDVFGPTNIPSPFSHSIILKGHSDVVLAEDRRELLKKLHERVVEFLRQKGVNIELEYTSV.

ATP contacts are provided by Gln35, Lys58, Thr59, Asp173, Glu174, Ile355, Arg372, and His375. Residues 39–230 (IPLIKQNYNV…FLVGKDREYR (192 aa)) form the Helicase ATP-binding domain. Residues 173 to 176 (DEIH) carry the DEIH box motif. The Helicase C-terminal domain maps to 247-419 (PVKDLVHSSE…SIHIPKNPLD (173 aa)). The tract at residues 420–506 (VLSQIIVSAS…IFYTNSGTIP (87 aa)) is WH domain. Positions 507-875 (DEAMISVVTE…VNIELEYTSV (369 aa)) are domain 4.

This sequence belongs to the Lhr helicase family. Lhr-Core subfamily. As to quaternary structure, monomer and homodimer. The monomeric form has helicase, ATPase and strand annealing activities, while the dimeric form only has ATPAse and strand annealing activities. Interacts with DNA topoisomerase 3 (topA).

It catalyses the reaction Couples ATP hydrolysis with the unwinding of duplex DNA by translocating in the 3'-5' direction.. The catalysed reaction is ATP + H2O = ADP + phosphate + H(+). Its activity is regulated as follows. DNA topoisomerase 3 (topA) inhibits helicase activity on Holliday junctions (HJ) but has no effect on ATPase activity. Functionally, DNA helicase that translocates in a 3'-5' direction on single-stranded (ss)DNA, probably involved in DNA repair. Unwinds DNA in a 3'-5' direction, unwinding is ATP-dependent, acts preferentially on fork and 3'-tailed DNA; bubble and blunt-ended double-stranded (ds)DNA are not substrates. Has winding and unwinding activity, unwinds Holliday junction (HJ) DNA in the presence of ATP, the main product is forked DNA, single-stranded binding protein (SSB) does not stimulate activity. Anneals complementary oligonucleotides in an ATP-independent manner to form HJ and fork structures, thus can perform strand exchange. Preferentially binds HJ, forked and ssDNA, dsDNA is bound less well. LhrC-Core (Hel112) inhibits the exonuclease activity of the HerA-NurA complex on ss- and dsDNA, has no effect on ssDNA nicking by NurA; HerA-NurA are involved in DNA end-resection during DNA double-strand break repair. This chain is ATP-dependent helicase Lhr-Core, found in Saccharolobus solfataricus (strain ATCC 35092 / DSM 1617 / JCM 11322 / P2) (Sulfolobus solfataricus).